The primary structure comprises 389 residues: S-adenosylmethionine synthase (389 aa).

Histidine 19 provides a ligand contact to ATP. Position 21 (aspartate 21) interacts with Mg(2+). Glutamate 47 is a K(+) binding site. L-methionine is bound by residues glutamate 60 and glutamine 103. Residues 103 to 113 (QSVDIAQGVDR) form a flexible loop region. ATP-binding positions include 168–170 (DGK), 234–235 (RF), aspartate 243, 249–250 (RK), alanine 266, and lysine 270. Aspartate 243 provides a ligand contact to L-methionine. Lysine 274 is an L-methionine binding site.

It belongs to the AdoMet synthase family. Homotetramer; dimer of dimers. Requires Mg(2+) as cofactor. K(+) is required as a cofactor.

It is found in the cytoplasm. The catalysed reaction is L-methionine + ATP + H2O = S-adenosyl-L-methionine + phosphate + diphosphate. Its pathway is amino-acid biosynthesis; S-adenosyl-L-methionine biosynthesis; S-adenosyl-L-methionine from L-methionine: step 1/1. Functionally, catalyzes the formation of S-adenosylmethionine (AdoMet) from methionine and ATP. The overall synthetic reaction is composed of two sequential steps, AdoMet formation and the subsequent tripolyphosphate hydrolysis which occurs prior to release of AdoMet from the enzyme. The protein is S-adenosylmethionine synthase of Maridesulfovibrio salexigens (strain ATCC 14822 / DSM 2638 / NCIMB 8403 / VKM B-1763) (Desulfovibrio salexigens).